Consider the following 92-residue polypeptide: MARSIKKGPFIDEHLAKKVLAEGPNSKKIIKTWSRRSTITPDFIGLSFAVHNGRKFVPVYVTENMVGHKLGEFSPTRTFHGHAADRKSKAKR.

Belongs to the universal ribosomal protein uS19 family.

Protein S19 forms a complex with S13 that binds strongly to the 16S ribosomal RNA. This is Small ribosomal subunit protein uS19 from Pelobacter propionicus (strain DSM 2379 / NBRC 103807 / OttBd1).